The chain runs to 240 residues: MTRGAIHNRDAFLEHIAHRLGRAPRLSGVSRPQWSNQPQWKVLAGYSQDDLLNVLQKQCGLIHTDYIETTSAELAGALRRQVAAYGGGPVIVPDDPRFAEYGLSALLRDEWPAEQTTVHIWNPALGRQNIDAAEQANVGIAFSDITLAESGTVVLFSRNEQGRAIHFLPKTYIAIVPKSTVVPRMTQAAAVIHEQIEKGGLVPSCINFITGPSNSADIEMNLVVGVHGPMKAAYIVVTDR.

Belongs to the LutC/YkgG family.

Is involved in L-lactate degradation and allows cells to grow with lactate as the sole carbon source. The polypeptide is Lactate utilization protein C (Geobacillus kaustophilus (strain HTA426)).